The chain runs to 155 residues: Deoxyuridine 5'-triphosphate nucleotidohydrolase (155 aa).

Substrate contacts are provided by residues R74–G76, N87, and L91–D93.

The protein belongs to the dUTPase family. Requires Mg(2+) as cofactor.

The enzyme catalyses dUTP + H2O = dUMP + diphosphate + H(+). It functions in the pathway pyrimidine metabolism; dUMP biosynthesis; dUMP from dCTP (dUTP route): step 2/2. This enzyme is involved in nucleotide metabolism: it produces dUMP, the immediate precursor of thymidine nucleotides and it decreases the intracellular concentration of dUTP so that uracil cannot be incorporated into DNA. The polypeptide is Deoxyuridine 5'-triphosphate nucleotidohydrolase (Xanthomonas axonopodis pv. citri (strain 306)).